Here is a 129-residue protein sequence, read N- to C-terminus: Small ribosomal subunit protein uS11 (129 aa).

It belongs to the universal ribosomal protein uS11 family. As to quaternary structure, part of the 30S ribosomal subunit. Interacts with proteins S7 and S18. Binds to IF-3.

Its function is as follows. Located on the platform of the 30S subunit, it bridges several disparate RNA helices of the 16S rRNA. Forms part of the Shine-Dalgarno cleft in the 70S ribosome. The protein is Small ribosomal subunit protein uS11 of Pseudomonas entomophila (strain L48).